The following is a 196-amino-acid chain: Small ribosomal subunit protein uS4c (196 aa).

The segment covering 1 to 14 (MSRYRGPRLKKIRR) has biased composition (basic residues). The segment at 1–43 (MSRYRGPRLKKIRRLGALPGLTRKTPKSGSNPKKKFHSGKKEQ) is disordered. One can recognise an S4 RNA-binding domain in the interval 89-169 (MRLDNILFRL…LPKHLTIDTL (81 aa)).

It belongs to the universal ribosomal protein uS4 family. In terms of assembly, part of the 30S ribosomal subunit. Contacts protein S5. The interaction surface between S4 and S5 is involved in control of translational fidelity.

The protein resides in the plastid. It localises to the chloroplast. One of the primary rRNA binding proteins, it binds directly to 16S rRNA where it nucleates assembly of the body of the 30S subunit. Its function is as follows. With S5 and S12 plays an important role in translational accuracy. The sequence is that of Small ribosomal subunit protein uS4c (rps4) from Melica uniflora (Wood melick grass).